The primary structure comprises 615 residues: Dihydroxy-acid dehydratase (615 aa).

Asp81 is a binding site for Mg(2+). Cys122 is a binding site for [2Fe-2S] cluster. Mg(2+)-binding residues include Asp123 and Lys124. Residue Lys124 is modified to N6-carboxylysine. [2Fe-2S] cluster is bound at residue Cys193. Residue Glu489 participates in Mg(2+) binding. Ser515 acts as the Proton acceptor in catalysis.

The protein belongs to the IlvD/Edd family. In terms of assembly, homodimer. It depends on [2Fe-2S] cluster as a cofactor. Mg(2+) is required as a cofactor.

The catalysed reaction is (2R)-2,3-dihydroxy-3-methylbutanoate = 3-methyl-2-oxobutanoate + H2O. It carries out the reaction (2R,3R)-2,3-dihydroxy-3-methylpentanoate = (S)-3-methyl-2-oxopentanoate + H2O. It participates in amino-acid biosynthesis; L-isoleucine biosynthesis; L-isoleucine from 2-oxobutanoate: step 3/4. Its pathway is amino-acid biosynthesis; L-valine biosynthesis; L-valine from pyruvate: step 3/4. Functionally, functions in the biosynthesis of branched-chain amino acids. Catalyzes the dehydration of (2R,3R)-2,3-dihydroxy-3-methylpentanoate (2,3-dihydroxy-3-methylvalerate) into 2-oxo-3-methylpentanoate (2-oxo-3-methylvalerate) and of (2R)-2,3-dihydroxy-3-methylbutanoate (2,3-dihydroxyisovalerate) into 2-oxo-3-methylbutanoate (2-oxoisovalerate), the penultimate precursor to L-isoleucine and L-valine, respectively. This is Dihydroxy-acid dehydratase from Pseudomonas savastanoi pv. phaseolicola (strain 1448A / Race 6) (Pseudomonas syringae pv. phaseolicola (strain 1448A / Race 6)).